Here is a 37-residue protein sequence, read N- to C-terminus: Large ribosomal subunit protein bL36c (37 aa).

It belongs to the bacterial ribosomal protein bL36 family.

It localises to the plastid. The polypeptide is Large ribosomal subunit protein bL36c (rpl36) (Euglena longa (Euglenophycean alga)).